The following is a 346-amino-acid chain: tRNA N6-adenosine threonylcarbamoyltransferase (346 aa).

Residues His-117, His-121, and Tyr-138 each contribute to the a divalent metal cation site. Substrate contacts are provided by residues 138-142 (YVSGG), Asp-170, Gly-185, and Asn-277. Asp-305 provides a ligand contact to a divalent metal cation.

The protein belongs to the KAE1 / TsaD family. Component of the EKC/KEOPS complex composed of at least SPAP27G11.07c/BUD32, cgi121, gon7, pgp2 and SPAC4H3.13/PCC1; the whole complex dimerizes. A divalent metal cation is required as a cofactor.

The protein resides in the cytoplasm. It localises to the nucleus. The catalysed reaction is L-threonylcarbamoyladenylate + adenosine(37) in tRNA = N(6)-L-threonylcarbamoyladenosine(37) in tRNA + AMP + H(+). Its function is as follows. Component of the EKC/KEOPS complex that is required for the formation of a threonylcarbamoyl group on adenosine at position 37 (t(6)A37) in tRNAs that read codons beginning with adenine. The complex is probably involved in the transfer of the threonylcarbamoyl moiety of threonylcarbamoyl-AMP (TC-AMP) to the N6 group of A37. Pgp2 likely plays a direct catalytic role in this reaction, but requires other protein(s) of the complex to fulfill this activity. The EKC/KEOPS complex also promotes both telomere uncapping and telomere elongation. The complex is required for efficient recruitment of transcriptional coactivators. This is tRNA N6-adenosine threonylcarbamoyltransferase (pgp2) from Schizosaccharomyces pombe (strain 972 / ATCC 24843) (Fission yeast).